Reading from the N-terminus, the 338-residue chain is Heat-inducible transcription repressor HrcA (338 aa).

This sequence belongs to the HrcA family.

Functionally, negative regulator of class I heat shock genes (grpE-dnaK-dnaJ and groELS operons). Prevents heat-shock induction of these operons. This chain is Heat-inducible transcription repressor HrcA, found in Bacillus thuringiensis (strain Al Hakam).